The following is a 352-amino-acid chain: tRNA-specific 2-thiouridylase MnmA (352 aa).

ATP-binding positions include 6 to 13 and Leu-32; that span reads AMSGGVDS. Cys-101 (nucleophile) is an active-site residue. The cysteines at positions 101 and 194 are disulfide-linked. Gly-125 lines the ATP pocket. Residues 144-146 are interaction with tRNA; sequence KDQ. Residue Cys-194 is the Cysteine persulfide intermediate of the active site.

This sequence belongs to the MnmA/TRMU family.

Its subcellular location is the cytoplasm. The enzyme catalyses S-sulfanyl-L-cysteinyl-[protein] + uridine(34) in tRNA + AH2 + ATP = 2-thiouridine(34) in tRNA + L-cysteinyl-[protein] + A + AMP + diphosphate + H(+). Catalyzes the 2-thiolation of uridine at the wobble position (U34) of tRNA, leading to the formation of s(2)U34. The sequence is that of tRNA-specific 2-thiouridylase MnmA from Frankia casuarinae (strain DSM 45818 / CECT 9043 / HFP020203 / CcI3).